The following is a 122-amino-acid chain: Large ribosomal subunit protein uL14 (122 aa).

The protein belongs to the universal ribosomal protein uL14 family. As to quaternary structure, part of the 50S ribosomal subunit. Forms a cluster with proteins L3 and L19. In the 70S ribosome, L14 and L19 interact and together make contacts with the 16S rRNA in bridges B5 and B8.

Functionally, binds to 23S rRNA. Forms part of two intersubunit bridges in the 70S ribosome. The protein is Large ribosomal subunit protein uL14 of Chloroherpeton thalassium (strain ATCC 35110 / GB-78).